The following is a 472-amino-acid chain: FAD-linked oxidoreductase azaL (472 aa).

The N-terminal stretch at 1–18 is a signal peptide; that stretch reads MFRTILLCSLGLTTLSSA. N-linked (GlcNAc...) asparagine glycosylation is found at Asn-22, Asn-44, Asn-102, Asn-123, Asn-227, Asn-246, Asn-273, Asn-305, Asn-318, Asn-390, and Asn-415. The FAD-binding PCMH-type domain maps to 54–228; it reads TTYDAPTYIG…TSATYKIYNA (175 aa).

Belongs to the oxygen-dependent FAD-linked oxidoreductase family.

It functions in the pathway secondary metabolite biosynthesis. Its function is as follows. FAD-linked oxidoreductase; part of the gene cluster that mediates the biosynthesis of azaphilones, a class of fungal metabolites characterized by a highly oxygenated pyrano-quinone bicyclic core and exhibiting a broad range of bioactivities. In the first step, the non-reducing polyketide synthase azaA forms the hexaketide precursor from successive condensations of five malonyl-CoA units, presumably with a simple acetyl-CoA starter unit. The reactive polyketide chain then undergoes a PT-mediated C2-C7 cyclization to afford the aromatic ring and is eventually released as an aldehyde through the R-domain. The putative ketoreductase azaE is proposed to catalyze the reduction of the terminal ketone resulting in the early culture product FK17-P2a. The monooxygenase azaH was demonstrated to be the only enzyme required to convert FK17-P2a to azanigerone E. AzaH first hydroxylates the benzaldehyde intermediate FK17-P2a at C4, which triggers the formation of the pyran-ring to afford azanigerone E. In parallel, the 2,4-dimethylhexanoyl chain is synthesized by the HR-PKS azaB and is proposed to be transferred to the C4-hydroxyl of azanigerone E by the acyltransferase azaD directly from the ACP domain of azaB. Alternatively, the 2,4-dimethyl-hexanoyl chain may be offloaded from the HR-PKS as a carboxylic acid and converted to an acyl-CoA by azaF. The resulting acyl-CoA molecule could then be taken up as a substrate by AzaD to form azanigerone B. To yield the carboxylic acid substituent in azanigerone A, the hydroxypropyl side chain of azanigerone B would need to undergo a C-C oxidative cleavage catalyzed by cytochrome P450 AzaI. AzaI is proposed to act on a vicinal diol that leads to a C-C bond scission either through an alkoxyradical intermediate or a peroxy complex. In the biosynthesis of azanigerone A, azanigerone B first undergoes hydroxylation at C10, possibly catalyzed by one of the two FAD-dependent monooxygenases encoded in the cluster, azaG or azaL, resulting in the vicinal diol azanigerone C. Oxidative cleavage of azanigerone C by azaI would yield the corresponding aldehyde derivative of azanigerone A. Finally, the dehydrogenase azaJ is proposed to convert the aldehyde functional group into the carboxylic acid, completing the conversion from azanigerone B to azanigerone A. Alternatively, the oxidation of aldehyde to carboxylic acid may be catalyzed by the same P450 enzyme azaI via consecutive oxidation or by endogenous alcohol dehydrogenase. The polypeptide is FAD-linked oxidoreductase azaL (Aspergillus niger (strain ATCC 1015 / CBS 113.46 / FGSC A1144 / LSHB Ac4 / NCTC 3858a / NRRL 328 / USDA 3528.7)).